We begin with the raw amino-acid sequence, 72 residues long: UPF0346 protein EF_1680 (72 aa).

This sequence belongs to the UPF0346 family.

In Enterococcus faecalis (strain ATCC 700802 / V583), this protein is UPF0346 protein EF_1680.